We begin with the raw amino-acid sequence, 535 residues long: Endogenous retrovirus group V member 2 Env polyprotein (535 aa).

The signal sequence occupies residues 1–21 (MTEKFLFLYLSLLPMPLLSQA). Over 22 to 321 (QWNENSLVSF…NTTQPRQKRA (300 aa)) the chain is Extracellular. N68 carries an N-linked (GlcNAc...) asparagine glycan. The chain crosses the membrane as a helical span at residues 322-342 (LGLILAGMGAAIGMIAPWGGF). Over 343–456 (TYHDVTLRNL…VKSALPSLNW (114 aa)) the chain is Cytoplasmic. A helical membrane pass occupies residues 457–477 (FVPLLGPATVILLLFLFGPCF). Residues 478–535 (FNLLIKCVSSRIKQFHMKSPQMERYQLSVIGGPSTYKHISPLDASGQRFRETMEEFSL) are Extracellular-facing.

The protein belongs to the gamma type-C retroviral envelope protein family. Expressed in placenta.

It is found in the membrane. This chain is Endogenous retrovirus group V member 2 Env polyprotein (ERVV-2), found in Homo sapiens (Human).